The following is a 248-amino-acid chain: Trypsin I-P38 (248 aa).

The signal sequence occupies residues 1–15 (MKFLVLVAFLGVAVA). Residues 16-25 (FPISDEDDDK) constitute a propeptide, activation peptide. Residues 26-246 (IVGGYSCARS…YVSWIKTTMS (221 aa)) form the Peptidase S1 domain. 6 disulfides stabilise this stretch: Cys-32–Cys-162, Cys-50–Cys-66, Cys-134–Cys-235, Cys-141–Cys-208, Cys-173–Cys-187, and Cys-198–Cys-222. Catalysis depends on His-65, which acts as the Charge relay system. Positions 77, 79, and 87 each coordinate Ca(2+). Asp-109 acts as the Charge relay system in catalysis. The active-site Charge relay system is Ser-202.

Belongs to the peptidase S1 family. Requires Ca(2+) as cofactor. In terms of tissue distribution, high levels are seen in the pancreas while lower levels are found in the liver, spleen and thymus.

The protein localises to the secreted. Its subcellular location is the extracellular space. It carries out the reaction Preferential cleavage: Arg-|-Xaa, Lys-|-Xaa.. The chain is Trypsin I-P38 from Gallus gallus (Chicken).